The primary structure comprises 299 residues: ATP phosphoribosyltransferase (299 aa).

Belongs to the ATP phosphoribosyltransferase family. Long subfamily. Mg(2+) serves as cofactor.

It localises to the cytoplasm. It carries out the reaction 1-(5-phospho-beta-D-ribosyl)-ATP + diphosphate = 5-phospho-alpha-D-ribose 1-diphosphate + ATP. Its pathway is amino-acid biosynthesis; L-histidine biosynthesis; L-histidine from 5-phospho-alpha-D-ribose 1-diphosphate: step 1/9. Its activity is regulated as follows. Feedback inhibited by histidine. Functionally, catalyzes the condensation of ATP and 5-phosphoribose 1-diphosphate to form N'-(5'-phosphoribosyl)-ATP (PR-ATP). Has a crucial role in the pathway because the rate of histidine biosynthesis seems to be controlled primarily by regulation of HisG enzymatic activity. The sequence is that of ATP phosphoribosyltransferase from Shewanella oneidensis (strain ATCC 700550 / JCM 31522 / CIP 106686 / LMG 19005 / NCIMB 14063 / MR-1).